A 700-amino-acid polypeptide reads, in one-letter code: Elongation factor G (700 aa).

Positions 10 to 286 (KKVRNIGIMA…AVIDYLPSPL (277 aa)) constitute a tr-type G domain. GTP contacts are provided by residues 19–26 (AHIDAGKT), 83–87 (DTPGH), and 137–140 (NKMD).

The protein belongs to the TRAFAC class translation factor GTPase superfamily. Classic translation factor GTPase family. EF-G/EF-2 subfamily.

It localises to the cytoplasm. In terms of biological role, catalyzes the GTP-dependent ribosomal translocation step during translation elongation. During this step, the ribosome changes from the pre-translocational (PRE) to the post-translocational (POST) state as the newly formed A-site-bound peptidyl-tRNA and P-site-bound deacylated tRNA move to the P and E sites, respectively. Catalyzes the coordinated movement of the two tRNA molecules, the mRNA and conformational changes in the ribosome. The protein is Elongation factor G of Nocardia farcinica (strain IFM 10152).